Consider the following 88-residue polypeptide: DNA-directed RNA polymerase subunit omega (88 aa).

It belongs to the RNA polymerase subunit omega family. In terms of assembly, the RNAP catalytic core consists of 2 alpha, 1 beta, 1 beta' and 1 omega subunit. When a sigma factor is associated with the core the holoenzyme is formed, which can initiate transcription.

It carries out the reaction RNA(n) + a ribonucleoside 5'-triphosphate = RNA(n+1) + diphosphate. Its function is as follows. Promotes RNA polymerase assembly. Latches the N- and C-terminal regions of the beta' subunit thereby facilitating its interaction with the beta and alpha subunits. This Anaeromyxobacter sp. (strain Fw109-5) protein is DNA-directed RNA polymerase subunit omega.